The chain runs to 294 residues: N-acetylmuramic acid 6-phosphate etherase (294 aa).

The SIS domain maps to 54–217 (VIQSFEEEGR…STASMIGVGK (164 aa)). Residue Glu82 is the Proton donor of the active site. The active site involves Glu113.

It belongs to the GCKR-like family. MurNAc-6-P etherase subfamily. In terms of assembly, homodimer.

It catalyses the reaction N-acetyl-D-muramate 6-phosphate + H2O = N-acetyl-D-glucosamine 6-phosphate + (R)-lactate. It functions in the pathway amino-sugar metabolism; N-acetylmuramate degradation. In terms of biological role, specifically catalyzes the cleavage of the D-lactyl ether substituent of MurNAc 6-phosphate, producing GlcNAc 6-phosphate and D-lactate. The protein is N-acetylmuramic acid 6-phosphate etherase of Bacillus cereus (strain ZK / E33L).